Reading from the N-terminus, the 226-residue chain is Probable septum site-determining protein MinC (226 aa).

This sequence belongs to the MinC family. In terms of assembly, interacts with MinD and FtsZ.

Its function is as follows. Cell division inhibitor that blocks the formation of polar Z ring septums. Rapidly oscillates between the poles of the cell to destabilize FtsZ filaments that have formed before they mature into polar Z rings. Prevents FtsZ polymerization. In Edwardsiella ictaluri (strain 93-146), this protein is Probable septum site-determining protein MinC.